Here is a 576-residue protein sequence, read N- to C-terminus: Arginine--tRNA ligase (576 aa).

A 'HIGH' region motif is present at residues 122-132; sequence PNVAKEMHVGH.

The protein belongs to the class-I aminoacyl-tRNA synthetase family. As to quaternary structure, monomer.

The protein resides in the cytoplasm. The catalysed reaction is tRNA(Arg) + L-arginine + ATP = L-arginyl-tRNA(Arg) + AMP + diphosphate. The sequence is that of Arginine--tRNA ligase from Hamiltonella defensa subsp. Acyrthosiphon pisum (strain 5AT).